The primary structure comprises 78 residues: RNA-binding protein Hfq (78 aa).

The 60-residue stretch at 10–69 (DPFLNALRREHVPVSIYLVNGIKLQGQVESFDQYVVLLKNTVTQMVYKHAISTVVPARPV) folds into the Sm domain.

Belongs to the Hfq family. Homohexamer.

RNA chaperone that binds small regulatory RNA (sRNAs) and mRNAs to facilitate mRNA translational regulation in response to envelope stress, environmental stress and changes in metabolite concentrations. Also binds with high specificity to tRNAs. The chain is RNA-binding protein Hfq from Dechloromonas aromatica (strain RCB).